A 97-amino-acid polypeptide reads, in one-letter code: Cystatin-A (97 aa).

Met1 is modified (N-acetylmethionine). The short motif at 46–50 (QVVAG) is the Secondary area of contact element.

It belongs to the cystatin family.

The protein resides in the cytoplasm. Functionally, this is an intracellular thiol proteinase inhibitor. The protein is Cystatin-A (Csta) of Mus musculus (Mouse).